A 204-amino-acid chain; its full sequence is Large ribosomal subunit protein eL15 (204 aa).

The span at R172 to N182 shows a compositional bias: basic residues. A disordered region spans residues R172–R204. Residues K193–R204 show a composition bias toward polar residues.

This sequence belongs to the eukaryotic ribosomal protein eL15 family.

This Petunia hybrida (Petunia) protein is Large ribosomal subunit protein eL15 (RPL15).